A 316-amino-acid polypeptide reads, in one-letter code: MEKIEHTTISTNGINMHVASIGSGPAVLFLHGFPELWYSWRHQLLFLSSMGYRAIAPDLRGFGDTDAPPSPSSYTAHHIVGDLVGLLDQLGIDQVFLVGHDWGAMMAWYFCLFRPDRVKALVNLSVHFLRRHPSIKFVDGFRALLGDDFYFCQFQEPGVAEADFGSVDVATMLKKFLTMRDPRPPMIPKEKGFRALETPDPLPAWLTEEDIDYFAGKFRKTGFTGGFNYYRAFNLTWELTAPWSGSEIKVAAKFIVGDLDLVYHFPGAKEYIHGGGFKKDVPLLEEVVVVDGAAHFINQERPAEISSLIYDFIKKF.

An AB hydrolase-1 domain is found at 25–302 (PAVLFLHGFP…AAHFINQERP (278 aa)). Asp101 acts as the Nucleophile in catalysis. Residue Tyr150 participates in an epoxide binding. Tyr230 acts as the Proton donor in catalysis. His295 functions as the Proton acceptor in the catalytic mechanism.

Belongs to the AB hydrolase superfamily. Epoxide hydrolase family. As to quaternary structure, homodimer. Highly expressed in young fruits 15 days after anthesis (15-DAA). Also observed in stems and leaves.

It catalyses the reaction an epoxide + H2O = an ethanediol. The enzyme catalyses (24S)-24,25-epoxycucurbitadienol + H2O = (24R)-24,25-dihydroxycucurbitadienol. It participates in secondary metabolite biosynthesis; terpenoid biosynthesis. Its function is as follows. Epoxide hydrolase involved in the biosynthesis of cucurbitacin and mogroside tetracyclic triterpene natural products (e.g. siamenoside I and mogrosides IV, V and VI). Cucurbitacins have cytotoxic properties and exhibit deterrent taste as a defense barrier against herbivores. Mogrosides are nonsugar highly oxygenated compounds used as high-intensity zero-calorie sweeteners; they also possess pharmacological properties such as regulating immunity, lowering blood sugar and lipid levels, protecting the liver, and acting as antioxidants and antitumor agents. Catalyzes the hydrolysis of aromatic epoxide-containing substrates, such as the conversion of 24,25-epoxycucurbitadienol to 24,25-dihydroxycucurbitadienol. The sequence is that of Epoxide hydrolase 2 from Siraitia grosvenorii (Monk's fruit).